Consider the following 654-residue polypeptide: Amyloid beta precursor like protein 1 (654 aa).

The first 38 residues, 1 to 38 (MGPTSPAARGQGRRWRPPPLPLLLPLSLLLLRAQLAVG), serve as a signal peptide directing secretion. Topologically, residues 39–584 (NLAVGSPSAA…APSGTGVSRE (546 aa)) are extracellular. Residues 50–146 (APGSAQVAGL…PFHCLPGEFV (97 aa)) form a GFLD subdomain region. An E1 domain is found at 50-212 (APGSAQVAGL…RGVEYVCCPP (163 aa)). 6 cysteine pairs are disulfide-bonded: Cys-60–Cys-84, Cys-95–Cys-140, Cys-120–Cys-128, Cys-156–Cys-210, Cys-167–Cys-197, and Cys-181–Cys-209. Positions 154–212 (EGCRFLHQERMDQCESSTRRHQEAQEACSSQGLILHGSGMLLPCGSDRFRGVEYVCCPP) are cuBD subdomain. His-174 contributes to the Cu(2+) binding site. Residues Glu-206, Cys-209, and Cys-210 each coordinate Zn(2+). The interval 214-297 (ATPNPSGMAA…VTPTPRPTDG (84 aa)) is disordered. Residues 262-272 (QAEEEEEEEEE) show a composition bias toward acidic residues. In terms of domain architecture, E2 spans 297-488 (GVDVYFGMPG…QELRPQIQEL (192 aa)). Heparin-binding stretches follow at residues 314–346 (FLRA…SKNL) and 414–445 (LMAL…DPEK). Residues 446-463 (AQQMRFQVQTHLQVIEER) form a collagen-binding region. The N-linked (GlcNAc...) asparagine glycan is linked to Asn-465. The disordered stretch occupies residues 497–580 (SELDASVPGS…RDELAPSGTG (84 aa)). Positions 508–523 (SEDKGSLQPPESKDDP) are enriched in basic and acidic residues. A compositionally biased stretch (polar residues) spans 529–539 (KGSTDQESSSS). A glycan (N-linked (GlcNAc...) asparagine) is linked at Asn-555. Cu(2+) is bound at residue His-565. His-565 serves as a coordination point for Zn(2+). A helical transmembrane segment spans residues 585 to 607 (ALSGLLIMGAGGGSLIVLSLLLL). The short motif at 608 to 619 (RKKKPYGTISHG) is the Basolateral sorting signal element. Residues 608-654 (RKKKPYGTISHGVVEVDPMLTLEEQQLRELQRHGYENPTYRFLEERP) are Cytoplasmic-facing. Residues 636 to 652 (ELQRHGYENPTYRFLEE) are interaction with DAB1. An interaction with DAB2 region spans residues 640 to 654 (HGYENPTYRFLEERP). The NPXY motif; contains endocytosis signal motif lies at 644–647 (NPTY).

It belongs to the APP family. In terms of assembly, monomer and homodimer. Heparin binding promotes homodimerization. Binds, via its C-terminus, to the PID domain of several cytoplasmic proteins, including APBB and APBA family members, MAPK8IP1 and DAB1. Binding to Dab1 inhibits its serine phosphorylation. Interacts with CPEB1. Interacts (via NPXY motif) with DAB2 (via PID domain); the interaction is impaired by tyrosine phosphorylation of the NPXY motif. Interacts (via NPXY motif) with DAB1. In terms of processing, proteolytically cleaved by caspases during neuronal apoptosis. Cleaved, in vitro, at Asp-624 by caspase-3. N- and O-glycosylated.

It is found in the cell membrane. The protein resides in the cytoplasm. May play a role in postsynaptic function. The C-terminal gamma-secretase processed fragment, ALID1, activates transcription activation through APBB1 (Fe65) binding. Couples to JIP signal transduction through C-terminal binding. May interact with cellular G-protein signaling pathways. Can regulate neurite outgrowth through binding to components of the extracellular matrix such as heparin and collagen I. Its function is as follows. The gamma-CTF peptide, C30, is a potent enhancer of neuronal apoptosis. The protein is Amyloid beta precursor like protein 1 (Aplp1) of Mus musculus (Mouse).